Here is a 335-residue protein sequence, read N- to C-terminus: MSIREDRNQDATIYLGNLDEKVTDSILFELCLQAGPVVNIHIPRDRVRNSHNGFGFCEFLHEQDVEYACQILNQVKLFGKPIRVNRASQDRGVNTLIGANLFVGNLDPLVDERVLYDTFSALGQLVKAPQVARDENGRSKGYGFVSYDSFETADAAIEAMNNQFLMNKPITVSYAFKREGKGERHGDIAERKLAAAAKKNKVAVTPQSTLPPGFSPATPAPTSAANTPATIAATSIPPVPNVPLVGATTAVPPLSIPNVLPFTAAQHFPGMPAMPMMNVPMGPGGAPLVPPPPPGMVMASPSPAAATIPGAPVMPNIPFYQTINAQNGYSQQQRR.

2 RRM domains span residues Ile-13–Val-84 and Leu-101–Val-172. The tract at residues Val-204–Ser-223 is disordered.

This sequence belongs to the SF3B4 family.

Its subcellular location is the nucleus. This Schizosaccharomyces pombe (strain 972 / ATCC 24843) (Fission yeast) protein is Spliceosome-associated protein 49 (sap49).